We begin with the raw amino-acid sequence, 314 residues long: Protoheme IX farnesyltransferase (314 aa).

Helical transmembrane passes span 58–78, 107–127, 130–150, 173–193, 227–247, 248–268, and 294–314; these read LWLVVATVVGGAFSAGSASVF, AALVFGFVLGILSTVILYVWV, LSAALSVAANAFYVLVYTMLL, WTAVTGSLSWVPVVLFAVVFF, VGRQVVIYSWVMVATSLLLWP, VAGTGIFYPIAAGVLGAVFLL, and SSNLYLSLLFVAVALDPLLAG.

The protein belongs to the UbiA prenyltransferase family. Protoheme IX farnesyltransferase subfamily.

Its subcellular location is the cell membrane. It catalyses the reaction heme b + (2E,6E)-farnesyl diphosphate + H2O = Fe(II)-heme o + diphosphate. The protein operates within porphyrin-containing compound metabolism; heme O biosynthesis; heme O from protoheme: step 1/1. Converts heme B (protoheme IX) to heme O by substitution of the vinyl group on carbon 2 of heme B porphyrin ring with a hydroxyethyl farnesyl side group. In Nocardioides sp. (strain ATCC BAA-499 / JS614), this protein is Protoheme IX farnesyltransferase.